Reading from the N-terminus, the 131-residue chain is Chorion class high-cysteine HCB protein 12 (131 aa).

Positions 1–21 (MAAKLIVFVCAIALVAQSVLG) are cleaved as a signal peptide. The interval 22-46 (TGCGCCCRGCGCGCGGCGCGCCENF) is left arm. The tract at residues 47–110 (RVCSNSAAPT…GNGCVGITRS (64 aa)) is central domain. The segment at 111 to 131 (CGGCGCGCGGCGCGCGGCGCC) is right arm (Gly-rich tandem repeats).

It belongs to the chorion protein family.

Functionally, this protein is one of many from the eggshell of the silk moth. The polypeptide is Chorion class high-cysteine HCB protein 12 (Bombyx mori (Silk moth)).